A 378-amino-acid chain; its full sequence is Sperm microtubule associated protein 2 (378 aa).

Disordered regions lie at residues 1–35 and 47–79; these read MGEL…SDGS and WLQS…LPEV. The segment covering 47–56 has biased composition (polar residues); it reads WLQSSQATTE. Positions 61 to 77 are enriched in acidic residues; sequence DPEEEIPPEEMVGEELP. THEG repeat units lie at residues 113–132, 179–198, 217–236, 253–272, 285–304, 321–340, and 355–374; these read AKCR…PKFN, TITV…PKRF, STLE…PKIR, AAQM…PRAP, PKPY…PKAL, VTKN…PKIR, and ASLV…PKHI. Ser290 carries the post-translational modification Phosphoserine.

In terms of assembly, interacts with CCT5.

It is found in the nucleus. Functionally, may be involved (but not essential) in spermatogenesis. The protein is Sperm microtubule associated protein 2 of Rattus norvegicus (Rat).